The primary structure comprises 522 residues: Cytochrome P450 26C1 (522 aa).

Residues Leu9–Ala29 traverse the membrane as a helical segment. Heme is bound at residue Cys459.

The protein belongs to the cytochrome P450 family. It depends on heme as a cofactor. Detected in most tissues at very low level.

The protein localises to the membrane. It carries out the reaction an organic molecule + reduced [NADPH--hemoprotein reductase] + O2 = an alcohol + oxidized [NADPH--hemoprotein reductase] + H2O + H(+). The enzyme catalyses all-trans-retinoate + reduced [NADPH--hemoprotein reductase] + O2 = all-trans-4-hydroxyretinoate + oxidized [NADPH--hemoprotein reductase] + H2O + H(+). The catalysed reaction is all-trans-4-hydroxyretinoate + reduced [NADPH--hemoprotein reductase] + O2 = all-trans-4-oxoretinoate + oxidized [NADPH--hemoprotein reductase] + 2 H2O + H(+). It catalyses the reaction 9-cis-retinoate + reduced [NADPH--hemoprotein reductase] + O2 = 9-cis-4-hydroxyretinoate + oxidized [NADPH--hemoprotein reductase] + H2O + H(+). It carries out the reaction 9-cis-4-hydroxyretinoate + reduced [NADPH--hemoprotein reductase] + O2 = 9-cis-4-oxoretinoate + oxidized [NADPH--hemoprotein reductase] + 2 H2O + H(+). The enzyme catalyses all-trans-4-hydroxy-13,14-dihydroretinoate + reduced [NADPH--hemoprotein reductase] + O2 = all-trans-4-oxo-13,14-dihydroretinoate + oxidized [NADPH--hemoprotein reductase] + 2 H2O + H(+). The catalysed reaction is all-trans-13,14-dihydroretinoate + reduced [NADPH--hemoprotein reductase] + O2 = all-trans-4-hydroxy-13,14-dihydroretinoate + oxidized [NADPH--hemoprotein reductase] + H2O + H(+). Its function is as follows. A cytochrome P450 monooxygenase involved in the metabolism of retinoates (RAs), the active metabolites of vitamin A, and critical signaling molecules in animals. RAs exist as at least four different isomers: all-trans-RA (atRA), 9-cis-RA, 13-cis-RA, and 9,13-dicis-RA, where atRA is considered to be the biologically active isomer, although 9-cis-RA and 13-cis-RA also have activity. Catalyzes the oxidation of atRA primarily at C-4. Oxidation of atRA limits its biological activity and initiates a degradative process leading to its eventual elimination, thereby contributes to the regulation of atRA homeostasis and signaling. Able to metabolize other RAs such as 9-cis with high efficiency. Can oxidize all-trans-13,14-dihydroretinoate (DRA) to metabolites which could include all-trans-4-oxo-DRA, all-trans-4-hydroxy-DRA, all-trans-5,8-epoxy-DRA, and all-trans-18-hydroxy-DRA. Shares sequence similarity with other CYP26 family members, but has higher affinity to 9-cis-RA and is much less sensitive to the inhibitory effects of ketoconazole. In cooperation with Cyp26a1, contributes to the CNS patterning and the development of regions of higher visual acuity. The chain is Cytochrome P450 26C1 (CYP26C1) from Homo sapiens (Human).